The following is a 31-amino-acid chain: Cytochrome b6-f complex subunit 6 (31 aa).

A helical membrane pass occupies residues 4–26; that stretch reads LTSYFGFLLAASTITPALFIGLN.

Belongs to the PetL family. In terms of assembly, the 4 large subunits of the cytochrome b6-f complex are cytochrome b6, subunit IV (17 kDa polypeptide, PetD), cytochrome f and the Rieske protein, while the 4 small subunits are PetG, PetL, PetM and PetN. The complex functions as a dimer.

The protein resides in the plastid. The protein localises to the chloroplast thylakoid membrane. Functionally, component of the cytochrome b6-f complex, which mediates electron transfer between photosystem II (PSII) and photosystem I (PSI), cyclic electron flow around PSI, and state transitions. PetL is important for photoautotrophic growth as well as for electron transfer efficiency and stability of the cytochrome b6-f complex. This is Cytochrome b6-f complex subunit 6 from Phalaenopsis aphrodite subsp. formosana (Moth orchid).